The following is a 114-amino-acid chain: Non-specific lipid-transfer protein 1 (114 aa).

Positions 1–23 (MEIAGKIACFVVLCMVVAAPCAE) are cleaved as a signal peptide. 4 disulfide bridges follow: Cys27–Cys73, Cys37–Cys50, Cys51–Cys96, and Cys71–Cys110.

This sequence belongs to the plant LTP family. As to expression, high expression in leaf epidermis and shoot apex, and also in root epidermis during seedling germination.

Functionally, plant non-specific lipid-transfer proteins transfer phospholipids as well as galactolipids across membranes. Binds cis-unsaturated fatty acids and jasmonic acid with a higher affinity than linear chain fatty acids. Formation of the complex with jasmonic acid results in a conformational change facilitating the LPT1 binding on the elicitin plasma membrane receptor that is known to be involved in plant defense induction. May also play a role in wax or cutin deposition in the cell walls of expanding epidermal cells and certain secretory tissues. This is Non-specific lipid-transfer protein 1 (LTP1) from Nicotiana tabacum (Common tobacco).